Consider the following 124-residue polypeptide: Ribonuclease P protein component (124 aa).

The protein belongs to the RnpA family. As to quaternary structure, consists of a catalytic RNA component (M1 or rnpB) and a protein subunit.

It catalyses the reaction Endonucleolytic cleavage of RNA, removing 5'-extranucleotides from tRNA precursor.. In terms of biological role, RNaseP catalyzes the removal of the 5'-leader sequence from pre-tRNA to produce the mature 5'-terminus. It can also cleave other RNA substrates such as 4.5S RNA. The protein component plays an auxiliary but essential role in vivo by binding to the 5'-leader sequence and broadening the substrate specificity of the ribozyme. The polypeptide is Ribonuclease P protein component (Maridesulfovibrio salexigens (strain ATCC 14822 / DSM 2638 / NCIMB 8403 / VKM B-1763) (Desulfovibrio salexigens)).